The chain runs to 257 residues: Adenylate kinase (257 aa).

Residue 52–57 (GAGKGT) participates in ATP binding. The tract at residues 72 to 101 (ATGDMLRSQVAKKTELGKEAKKIMDQGGLV) is NMP. AMP-binding positions include T73, R78, 99–101 (GLV), 128–131 (GFPR), and Q135. The tract at residues 169-206 (GRLVHPASGRSYHKIFNPPKNDMKDDVTGEPLIQRSDD) is LID. ATP-binding positions include R170 and 179–180 (SY). Residues R203 and R214 each contribute to the AMP site. Q242 is an ATP binding site.

It belongs to the adenylate kinase family. AK2 subfamily. In terms of assembly, monomer.

The protein resides in the cytoplasm. It is found in the cytosol. Its subcellular location is the mitochondrion intermembrane space. The catalysed reaction is AMP + ATP = 2 ADP. In terms of biological role, catalyzes the reversible transfer of the terminal phosphate group between ATP and AMP. Plays an important role in cellular energy homeostasis and in adenine nucleotide metabolism. Adenylate kinase activity is critical for regulation of the phosphate utilization and the AMP de novo biosynthesis pathways. The polypeptide is Adenylate kinase (adk1) (Aspergillus fumigatus (strain CBS 144.89 / FGSC A1163 / CEA10) (Neosartorya fumigata)).